The following is a 365-amino-acid chain: Putative agmatine deiminase (365 aa).

Agmatine-binding residues include glutamate 214 and aspartate 220. The active-site Amidino-cysteine intermediate is cysteine 357.

It belongs to the agmatine deiminase family. As to quaternary structure, tetramer of two homodimers.

The catalysed reaction is agmatine + H2O = N-carbamoylputrescine + NH4(+). The protein is Putative agmatine deiminase of Enterococcus faecalis (strain ATCC 700802 / V583).